An 84-amino-acid polypeptide reads, in one-letter code: Putative membrane protein insertion efficiency factor (84 aa).

It belongs to the UPF0161 family.

The protein localises to the cell inner membrane. Could be involved in insertion of integral membrane proteins into the membrane. This is Putative membrane protein insertion efficiency factor from Shewanella oneidensis (strain ATCC 700550 / JCM 31522 / CIP 106686 / LMG 19005 / NCIMB 14063 / MR-1).